Consider the following 245-residue polypeptide: Ribonuclease PH (245 aa).

Phosphate-binding positions include R93 and 131–133 (GTR).

Belongs to the RNase PH family. In terms of assembly, homohexameric ring arranged as a trimer of dimers.

It carries out the reaction tRNA(n+1) + phosphate = tRNA(n) + a ribonucleoside 5'-diphosphate. Functionally, phosphorolytic 3'-5' exoribonuclease that plays an important role in tRNA 3'-end maturation. Removes nucleotide residues following the 3'-CCA terminus of tRNAs; can also add nucleotides to the ends of RNA molecules by using nucleoside diphosphates as substrates, but this may not be physiologically important. Probably plays a role in initiation of 16S rRNA degradation (leading to ribosome degradation) during starvation. In Corynebacterium glutamicum (strain ATCC 13032 / DSM 20300 / JCM 1318 / BCRC 11384 / CCUG 27702 / LMG 3730 / NBRC 12168 / NCIMB 10025 / NRRL B-2784 / 534), this protein is Ribonuclease PH.